The following is a 280-amino-acid chain: Adenosylcobinamide-GDP ribazoletransferase (280 aa).

6 consecutive transmembrane segments (helical) span residues 4–24, 39–59, 61–81, 108–128, 196–216, and 255–275; these read YLLA…GISM, VVGA…QVIF, GPVL…FNHL, TIGT…YGSI, FLIG…WIGL, and TALI…MGGF.

The protein belongs to the CobS family. Requires Mg(2+) as cofactor.

The protein resides in the cell membrane. The catalysed reaction is alpha-ribazole + adenosylcob(III)inamide-GDP = adenosylcob(III)alamin + GMP + H(+). It catalyses the reaction alpha-ribazole 5'-phosphate + adenosylcob(III)inamide-GDP = adenosylcob(III)alamin 5'-phosphate + GMP + H(+). It participates in cofactor biosynthesis; adenosylcobalamin biosynthesis; adenosylcobalamin from cob(II)yrinate a,c-diamide: step 7/7. Functionally, joins adenosylcobinamide-GDP and alpha-ribazole to generate adenosylcobalamin (Ado-cobalamin). Also synthesizes adenosylcobalamin 5'-phosphate from adenosylcobinamide-GDP and alpha-ribazole 5'-phosphate. This chain is Adenosylcobinamide-GDP ribazoletransferase, found in Methanosarcina barkeri (strain Fusaro / DSM 804).